Consider the following 26-residue polypeptide: Omega-conotoxin CVIC (26 aa).

Disulfide bonds link Cys-1–Cys-16, Cys-8–Cys-20, and Cys-15–Cys-26. Cys-26 carries the cysteine amide modification.

The protein belongs to the conotoxin O1 superfamily. As to expression, expressed by the venom duct.

The protein localises to the secreted. Functionally, omega-conotoxins act at presynaptic membranes, they bind and block voltage-gated calcium channels (Cav). This toxin blocks N-, P- and Q-type calcium channels. The chain is Omega-conotoxin CVIC from Conus catus (Cat cone).